The sequence spans 115 residues: MLKRCNFKNQVKYFQSDFEQLIRQHPEKIIILDFYATWCGPCKAIAPLYKELATTHKGIIFCKVDVDEAEDLCSKYDVKMMPTFIFTKNGDAIEALEGCVEDELRQKVLEHVSAQ.

In terms of domain architecture, Thioredoxin spans 2–114; it reads LKRCNFKNQV…RQKVLEHVSA (113 aa). Residues cysteine 39 and cysteine 42 each act as nucleophile in the active site. Residues cysteine 39 and cysteine 42 are joined by a disulfide bond.

Belongs to the thioredoxin family. As to expression, expressed in ASJ and ASI ciliated sensory neurons. Expressed in the intestine (at protein level).

Its function is as follows. Participates in various redox reactions through the reversible oxidation of its active center dithiol to a disulfide and catalyzes dithiol-disulfide exchange reactions. Shown to facilitate the reduction of insulin disulfide bonds. Might play a role in the reversible nitrosylation of cysteine residues in target proteins, and thereby contributing to the response to intracellular nitric oxide. Shapes the ASJ sensory neuron biphasic response to nitric oxide (NO) exposure; trans-nitrosylation activity might inhibit calcium flux to the cytoplasm in ASJ neurons when exposed to a NO stimulus, whereas de-nitrosylation activity might promote calcium flux when NO is diminished. By regulating the NO-induced ASJ sensory neuron activity, mediates the avoidance response to NO-producing organisms like P.aeruginosa. Positively regulates life span extension under normal and caloric restriction conditions, dauer formation and the oxidative stress response. Contributes to the down-regulation of expression of the insulin-like neuropeptide daf-28 in the ASJ neurons in a redox-independent fashion, thereby promoting dauer formation. Negatively regulates the nuclear localization of the intestinal skn-1 transcription factor in a p38 MAPK pathway-dependent and redox-independent fashion. The protein is Thioredoxin-1 (trx-1) of Caenorhabditis elegans.